A 228-amino-acid polypeptide reads, in one-letter code: Vesicle transport protein SEC20 (228 aa).

The Cytoplasmic segment spans residues 1-199; sequence MAAPQDVHVR…LITKYNRREL (199 aa). A coiled-coil region spans residues 37 to 90; the sequence is LSELTELNTKVKEKFQQLKHRIQELEQSAKEQDKESEKQLLLQEVENHKKQMLS. A helical; Anchor for type IV membrane protein membrane pass occupies residues 200–220; that stretch reads TDKLLIFLALALFLATVLYIV. At 221–228 the chain is on the lumenal side; the sequence is KKRLFPFL.

Belongs to the SEC20 family. Component of a SNARE complex consisting of STX18, USE1L, BNIP1/SEC20L and SEC22B. Interacts directly with STX18, RINT1/TIP20L and NAPA. Interacts with ZW10 through RINT1. Interacts with BCL2. Interacts with RNF186. Interacts with RNF185. Interacts with SQSTM1; increased by 'Lys-63'-linked polyubiquitination of BNIP1. Polyubiquitinated. 'Lys-63'-linked polyubiquitination by RNF185 increases the interaction with the autophagy receptor SQSTM1. Undergoes 'Lys-29'- and 'Lys-63'-linked polyubiquitination by RNF186 that may regulate BNIP1 localization to the mitochondrion.

The protein localises to the endoplasmic reticulum membrane. Its subcellular location is the mitochondrion membrane. Its function is as follows. As part of a SNARE complex may be involved in endoplasmic reticulum membranes fusion and be required for the maintenance of endoplasmic reticulum organization. Also plays a role in apoptosis. It is for instance required for endoplasmic reticulum stress-induced apoptosis. As a substrate of RNF185 interacting with SQSTM1, might also be involved in mitochondrial autophagy. The chain is Vesicle transport protein SEC20 from Rattus norvegicus (Rat).